The following is a 255-amino-acid chain: 4-hydroxy-tetrahydrodipicolinate reductase (255 aa).

Residues 9–14, Asp-35, 89–91, and 115–118 each bind NAD(+); these read GFKGKM, GTT, and APNF. Catalysis depends on His-145, which acts as the Proton donor/acceptor. A (S)-2,3,4,5-tetrahydrodipicolinate-binding site is contributed by His-146. Lys-149 (proton donor) is an active-site residue. 155-156 provides a ligand contact to (S)-2,3,4,5-tetrahydrodipicolinate; the sequence is GT.

The protein belongs to the DapB family.

Its subcellular location is the cytoplasm. It catalyses the reaction (S)-2,3,4,5-tetrahydrodipicolinate + NAD(+) + H2O = (2S,4S)-4-hydroxy-2,3,4,5-tetrahydrodipicolinate + NADH + H(+). The catalysed reaction is (S)-2,3,4,5-tetrahydrodipicolinate + NADP(+) + H2O = (2S,4S)-4-hydroxy-2,3,4,5-tetrahydrodipicolinate + NADPH + H(+). It participates in amino-acid biosynthesis; L-lysine biosynthesis via DAP pathway; (S)-tetrahydrodipicolinate from L-aspartate: step 4/4. Catalyzes the conversion of 4-hydroxy-tetrahydrodipicolinate (HTPA) to tetrahydrodipicolinate. The polypeptide is 4-hydroxy-tetrahydrodipicolinate reductase (Streptococcus pneumoniae serotype 19F (strain G54)).